A 322-amino-acid polypeptide reads, in one-letter code: Crystallin J1A (322 aa).

Belongs to the ADP-ribosylglycohydrolase family. J1 crystallin subfamily. In terms of tissue distribution, expressed in the rhopalia. Present in both the large and small eyes.

The chain is Crystallin J1A from Tripedalia cystophora (Jellyfish).